Here is a 501-residue protein sequence, read N- to C-terminus: Aspartate--tRNA ligase, cytoplasmic (501 aa).

Position 52 is a phosphothreonine (Thr52). An N6-acetyllysine modification is found at Lys74. Glu229 provides a ligand contact to L-aspartate. The residue at position 249 (Ser249) is a Phosphoserine. The aspartate stretch occupies residues 251–254 (QLYK). An L-aspartate-binding site is contributed by Arg273. ATP contacts are provided by residues 273–275 (RAE) and 281–283 (RHL). Lys374 bears the N6-acetyllysine mark. Residue Glu424 coordinates ATP. Residues Ser427 and Arg431 each contribute to the L-aspartate site. ATP is bound at residue 472-475 (GLER).

Belongs to the class-II aminoacyl-tRNA synthetase family. Type 2 subfamily. In terms of assembly, homodimer. Part of a multisubunit complex that groups tRNA ligases for Arg (RARS1), Asp (DARS1), Gln (QARS1), Ile (IARS1), Leu (LARS1), Lys (KARS1), Met (MARS1) the bifunctional ligase for Glu and Pro (EPRS1) and the auxiliary subunits AIMP1/p43, AIMP2/p38 and EEF1E1/p18.

The protein resides in the cytoplasm. It catalyses the reaction tRNA(Asp) + L-aspartate + ATP = L-aspartyl-tRNA(Asp) + AMP + diphosphate. In terms of biological role, catalyzes the specific attachment of an amino acid to its cognate tRNA in a 2 step reaction: the amino acid (AA) is first activated by ATP to form AA-AMP and then transferred to the acceptor end of the tRNA. This Rattus norvegicus (Rat) protein is Aspartate--tRNA ligase, cytoplasmic (Dars1).